Reading from the N-terminus, the 347-residue chain is tRNA pseudouridine synthase D (347 aa).

Asp78 functions as the Nucleophile in the catalytic mechanism. Residues 150–304 (GLPNFFGPQR…AEGTRRAARL (155 aa)) form the TRUD domain.

This sequence belongs to the pseudouridine synthase TruD family.

It catalyses the reaction uridine(13) in tRNA = pseudouridine(13) in tRNA. In terms of biological role, responsible for synthesis of pseudouridine from uracil-13 in transfer RNAs. The sequence is that of tRNA pseudouridine synthase D from Anaeromyxobacter dehalogenans (strain 2CP-C).